The primary structure comprises 398 residues: Lipoyl synthase, mitochondrial (398 aa).

The transit peptide at 1 to 32 (MIALRVHNTRVVSRSLTVWTRPSPTLTLSRSL) directs the protein to the mitochondrion. Residues C117, C122, C128, C147, C151, C154, and S362 each contribute to the [4Fe-4S] cluster site. In terms of domain architecture, Radical SAM core spans 132–351 (KKSEATATIM…RDTALEMGFL (220 aa)).

It belongs to the radical SAM superfamily. Lipoyl synthase family. [4Fe-4S] cluster serves as cofactor.

The protein resides in the mitochondrion. The catalysed reaction is [[Fe-S] cluster scaffold protein carrying a second [4Fe-4S](2+) cluster] + N(6)-octanoyl-L-lysyl-[protein] + 2 oxidized [2Fe-2S]-[ferredoxin] + 2 S-adenosyl-L-methionine + 4 H(+) = [[Fe-S] cluster scaffold protein] + N(6)-[(R)-dihydrolipoyl]-L-lysyl-[protein] + 4 Fe(3+) + 2 hydrogen sulfide + 2 5'-deoxyadenosine + 2 L-methionine + 2 reduced [2Fe-2S]-[ferredoxin]. It participates in protein modification; protein lipoylation via endogenous pathway; protein N(6)-(lipoyl)lysine from octanoyl-[acyl-carrier-protein]: step 2/2. Its function is as follows. Catalyzes the radical-mediated insertion of two sulfur atoms into the C-6 and C-8 positions of the octanoyl moiety bound to the lipoyl domains of lipoate-dependent enzymes, thereby converting the octanoylated domains into lipoylated derivatives. This is Lipoyl synthase, mitochondrial from Scheffersomyces stipitis (strain ATCC 58785 / CBS 6054 / NBRC 10063 / NRRL Y-11545) (Yeast).